Consider the following 268-residue polypeptide: Undecaprenyl-diphosphatase (268 aa).

Helical transmembrane passes span 47–67, 83–103, 109–129, 144–164, 184–204, 218–238, and 246–266; these read FAVLIQLGAILAILSIYFAKL, FVIGVLVAFLPAAMIGAVAGS, LFNPWVVCFSLIVGGAILLWV, FPLPMYFYIGCAQCLAMIPGV, AAEFSFFLAIPTMVGAFVYDF, IVAIGFVVSFITAVIVVKTFL, and FELFAWWRVIVGTLGLIALAM.

This sequence belongs to the UppP family.

It is found in the cell inner membrane. It carries out the reaction di-trans,octa-cis-undecaprenyl diphosphate + H2O = di-trans,octa-cis-undecaprenyl phosphate + phosphate + H(+). Catalyzes the dephosphorylation of undecaprenyl diphosphate (UPP). Confers resistance to bacitracin. This is Undecaprenyl-diphosphatase from Rhodopseudomonas palustris (strain BisB5).